Here is a 126-residue protein sequence, read N- to C-terminus: Prefoldin subunit beta (126 aa).

Belongs to the prefoldin subunit beta family. Heterohexamer of two alpha and four beta subunits.

It is found in the cytoplasm. Functionally, molecular chaperone capable of stabilizing a range of proteins. Seems to fulfill an ATP-independent, HSP70-like function in archaeal de novo protein folding. In Methanocella arvoryzae (strain DSM 22066 / NBRC 105507 / MRE50), this protein is Prefoldin subunit beta.